We begin with the raw amino-acid sequence, 417 residues long: MSQRKRYSLNVVTSPSIPSPTPSAPIRTNESNWEAASPASAASSFLPNVHHGGTVLNPGLGIMRSPSLNKSGAFGRSGSSGSSTVIEPSNIKLLLIGDANVGKTAMILSYCRELLTRAEMSRSVRLRHQQQQQHKDLGLKKTVVNHRLSMKEKRKRYSSNDFEKEFKDINHFADETSDFGNPNIGDDNNHEMADPNEIVIETRSTIGIDIKTNLVNIDNRFFNVILWDTAGQERYQNAIIPSLYKKTNAVILTYDITNAKSFQSCMERWIVQALENFSSQDLLKARFFLVGNKIDLYKERQVTHYDVVQMVQEMQLKHGIKISGNFEVSCKWVNVVERTMNMIILDLVENGCFENNDPCVSITTSDDVQGHEQEFHDTVEEPFNFTRQRQHQLEKNNTVDITKPNDDIANNQSICCV.

Residues 1–34 (MSQRKRYSLNVVTSPSIPSPTPSAPIRTNESNWE) are disordered. GTP is bound by residues 97-104 (GDANVGKT), 228-232 (DTAGQ), and 292-295 (NKID). 2 S-geranylgeranyl cysteine lipidation sites follow: cysteine 415 and cysteine 416.

It belongs to the small GTPase superfamily. Rab family. Interacts with MYO2 (via C-terminal tail domain). Interacts with YIF1, YIP3, YIP4 and YIP5.

Its subcellular location is the endoplasmic reticulum membrane. The protein resides in the bud tip. It localises to the bud neck. Involved in the positive control of both endoplasmic reticulum (ER) and mitochondrion inheritance during cell divison. Required for the MYO2-dependent retention of newly inherited mitochondria at the bud tip in developing daughter cells. This is GTP-binding protein YPT11 (YPT11) from Saccharomyces cerevisiae (strain YJM789) (Baker's yeast).